The sequence spans 156 residues: Small ribosomal subunit protein uS7 (156 aa).

Belongs to the universal ribosomal protein uS7 family. In terms of assembly, part of the 30S ribosomal subunit. Contacts proteins S9 and S11.

One of the primary rRNA binding proteins, it binds directly to 16S rRNA where it nucleates assembly of the head domain of the 30S subunit. Is located at the subunit interface close to the decoding center, probably blocks exit of the E-site tRNA. This Staphylococcus carnosus (strain TM300) protein is Small ribosomal subunit protein uS7.